We begin with the raw amino-acid sequence, 352 residues long: MKKIVFTGGGTVGHVTLNLLLMPKFIEDGWEVHYIGDKRGIEHQEILKSGLDVTFHSIATGKLRRYFSWQNMLDVFKVCWGIVQSLFIMLRLRPQTLFSKGGFVSVPPVIAARVSGVPVFIHESDLSMGLANKIAYKFATKMYSTFEQASSLSKVEHVGAVTKVSDQKNPEPDELVDIQSHFNHKLPTVLFVGGSAGARVFNQLVTDHKKELTERYNIINLTGDSSLNELSQNLFRVDYVTDLYQPLMELADIVVTRGGANTIFELLAIAKLHVIVPLGREASRGDQLENAAYFVKKGYAEDLQESDLTLDSLEEKLSHLLSHKEDYQAKMKASKELKSLADFYQLLKKDLS.

UDP-N-acetyl-alpha-D-glucosamine is bound by residues Ser195 and Gln287.

This sequence belongs to the glycosyltransferase 28 family. MurG subfamily.

The protein resides in the cell membrane. The enzyme catalyses Mur2Ac(oyl-L-Ala-gamma-D-Glu-L-Lys-D-Ala-D-Ala)-di-trans,octa-cis-undecaprenyl diphosphate + UDP-N-acetyl-alpha-D-glucosamine = beta-D-GlcNAc-(1-&gt;4)-Mur2Ac(oyl-L-Ala-gamma-D-Glu-L-Lys-D-Ala-D-Ala)-di-trans,octa-cis-undecaprenyl diphosphate + UDP + H(+). The protein operates within cell wall biogenesis; peptidoglycan biosynthesis. Its function is as follows. Cell wall formation. Catalyzes the transfer of a GlcNAc subunit on undecaprenyl-pyrophosphoryl-MurNAc-pentapeptide (lipid intermediate I) to form undecaprenyl-pyrophosphoryl-MurNAc-(pentapeptide)GlcNAc (lipid intermediate II). The polypeptide is UDP-N-acetylglucosamine--N-acetylmuramyl-(pentapeptide) pyrophosphoryl-undecaprenol N-acetylglucosamine transferase (Streptococcus pneumoniae serotype 19F (strain G54)).